We begin with the raw amino-acid sequence, 340 residues long: 4-hydroxy-2-oxovalerate aldolase (340 aa).

Residues 8–260 enclose the Pyruvate carboxyltransferase domain; that stretch reads VILHDMSLRD…HHGVNLYDIM (253 aa). 16-17 serves as a coordination point for substrate; sequence RD. D17 is a binding site for Mn(2+). H20 functions as the Proton acceptor in the catalytic mechanism. The substrate site is built by S170 and H199. Residues H199 and H201 each contribute to the Mn(2+) site. Residue Y290 participates in substrate binding.

This sequence belongs to the 4-hydroxy-2-oxovalerate aldolase family.

The catalysed reaction is (S)-4-hydroxy-2-oxopentanoate = acetaldehyde + pyruvate. This chain is 4-hydroxy-2-oxovalerate aldolase, found in Shewanella halifaxensis (strain HAW-EB4).